Here is a 424-residue protein sequence, read N- to C-terminus: UDP-N-acetylglucosamine 1-carboxyvinyltransferase (424 aa).

Residue 22 to 23 (KN) coordinates phosphoenolpyruvate. Residue R93 coordinates UDP-N-acetyl-alpha-D-glucosamine. The active-site Proton donor is C117. C117 carries the 2-(S-cysteinyl)pyruvic acid O-phosphothioketal modification. UDP-N-acetyl-alpha-D-glucosamine is bound by residues 162–165 (KVSV), D307, and I329.

It belongs to the EPSP synthase family. MurA subfamily.

The protein localises to the cytoplasm. It catalyses the reaction phosphoenolpyruvate + UDP-N-acetyl-alpha-D-glucosamine = UDP-N-acetyl-3-O-(1-carboxyvinyl)-alpha-D-glucosamine + phosphate. Its pathway is cell wall biogenesis; peptidoglycan biosynthesis. In terms of biological role, cell wall formation. Adds enolpyruvyl to UDP-N-acetylglucosamine. The protein is UDP-N-acetylglucosamine 1-carboxyvinyltransferase of Glaesserella parasuis serovar 5 (strain SH0165) (Haemophilus parasuis).